Here is a 185-residue protein sequence, read N- to C-terminus: Alkyl hydroperoxide reductase AhpD (185 aa).

Catalysis depends on cysteine 131, which acts as the Proton donor. Cysteine 131 and cysteine 134 are disulfide-bonded. Cysteine 134 serves as the catalytic Cysteine sulfenic acid (-SOH) intermediate.

This sequence belongs to the AhpD family. As to quaternary structure, homotrimer.

It carries out the reaction N(6)-[(R)-dihydrolipoyl]-L-lysyl-[lipoyl-carrier protein] + a hydroperoxide = N(6)-[(R)-lipoyl]-L-lysyl-[lipoyl-carrier protein] + an alcohol + H2O. Functionally, antioxidant protein with alkyl hydroperoxidase activity. Required for the reduction of the AhpC active site cysteine residues and for the regeneration of the AhpC enzyme activity. This Frankia alni (strain DSM 45986 / CECT 9034 / ACN14a) protein is Alkyl hydroperoxide reductase AhpD.